A 501-amino-acid polypeptide reads, in one-letter code: Actin nucleation-promoting factor WASL (501 aa).

The residue at position 2 (Ser-2) is an N-acetylserine. The WH1 domain maps to 31 to 138 (LGKKCVTMSS…KAVTDLLGRR (108 aa)). Positions 135 to 158 (LGRRQRKSEKRRDAPNGPNLPMAT) are disordered. A CRIB domain is found at 200–213 (IGTPSNFQHIGHVG). Ser-239 carries the phosphoserine; by TNK2 modification. The residue at position 253 (Tyr-253) is a Phosphotyrosine; by FAK1 and TNK2. 2 disordered regions span residues 263–403 (EAVK…GNKA) and 442–501 (QLKS…EWED). A compositionally biased stretch (pro residues) spans 273–387 (APPPPPPSRG…PPGPPPPPGL (115 aa)). The residue at position 304 (Arg-304) is an Omega-N-methylarginine. 2 consecutive WH2 domains span residues 401-418 (NKAALLDQIREGAQLKKV) and 429-446 (GRDALLDQIRQGIQLKSV). Over residues 442 to 453 (QLKSVSDGQEST) the composition is skewed to polar residues. Residues Ser-480 and Ser-481 each carry the phosphoserine modification. The span at 482–501 (DEDEDDDDEEDFEDDDEWED) shows a compositional bias: acidic residues.

In terms of assembly, binds actin and the Arp2/3 complex. Interacts with CDC42. Interacts with FCHSD1. Interacts with FCHSD2. Binds to SH3 domains of GRB2. Interacts with the C-terminal SH3 domain of DNMBP. Interacts with SNX9. Interacts with the WW domains of PRPF40A/FBP11. Interacts with PTK2/FAK1. Interacts with PACSIN1, PACSIN2 and PACSIN3. Interacts with NOSTRIN. Binds to TNK2. Interacts with SNX33. Interacts with NONO (via second RRM domain); the interaction is direct. Component of a multiprotein complex with NONO and SFPQ; associates with the complex via direct interaction with NONO. In terms of processing, phosphorylation at Ser-239, Tyr-253, Ser-480 and Ser-481 enhances actin polymerization activity.

Its subcellular location is the cytoplasm. The protein localises to the cytoskeleton. It is found in the nucleus. Regulates actin polymerization by stimulating the actin-nucleating activity of the Arp2/3 complex. Involved in various processes, such as mitosis and cytokinesis, via its role in the regulation of actin polymerization. Together with CDC42, involved in the extension and maintenance of the formation of thin, actin-rich surface projections called filopodia. In addition to its role in the cytoplasm, also plays a role in the nucleus by regulating gene transcription, probably by promoting nuclear actin polymerization. Binds to HSF1/HSTF1 and forms a complex on heat shock promoter elements (HSE) that negatively regulates HSP90 expression. Plays a role in dendrite spine morphogenesis. This is Actin nucleation-promoting factor WASL (Wasl) from Mus musculus (Mouse).